A 99-amino-acid chain; its full sequence is Large ribosomal subunit protein eL21 (99 aa).

Basic residues predominate over residues 1 to 18 (MVKHSRGNRTRSRKLLKK). The tract at residues 1 to 26 (MVKHSRGNRTRSRKLLKKSPRERGAV) is disordered.

This sequence belongs to the eukaryotic ribosomal protein eL21 family.

This is Large ribosomal subunit protein eL21 from Metallosphaera sedula (strain ATCC 51363 / DSM 5348 / JCM 9185 / NBRC 15509 / TH2).